We begin with the raw amino-acid sequence, 379 residues long: Probable pectin lyase A (379 aa).

A signal peptide spans 1–20 (MKYSTIFSAAAAVFAGSAAA). Cystine bridges form between cysteine 83/cysteine 102 and cysteine 92/cysteine 226. The N-linked (GlcNAc...) asparagine glycan is linked to asparagine 129. The active site involves arginine 256. Cysteine 322 and cysteine 330 form a disulfide bridge.

The protein belongs to the polysaccharide lyase 1 family.

The protein resides in the secreted. The catalysed reaction is Eliminative cleavage of (1-&gt;4)-alpha-D-galacturonan methyl ester to give oligosaccharides with 4-deoxy-6-O-methyl-alpha-D-galact-4-enuronosyl groups at their non-reducing ends.. Its function is as follows. Pectinolytic enzymes consist of four classes of enzymes: pectin lyase, polygalacturonase, pectin methylesterase and rhamnogalacturonase. Among pectinolytic enzymes, pectin lyase is the most important in depolymerization of pectin, since it cleaves internal glycosidic bonds of highly methylated pectins. The sequence is that of Probable pectin lyase A (pelA) from Aspergillus niger (strain ATCC MYA-4892 / CBS 513.88 / FGSC A1513).